The chain runs to 290 residues: Arylamine N-acetyltransferase 2 (290 aa).

Catalysis depends on Cys68, which acts as the Acyl-thioester intermediate. Ser103 and Gly104 together coordinate CoA. Substrate is bound at residue 106–107 (IH). Residues His107 and Asp122 contribute to the active site. A CoA-binding site is contributed by Tyr208.

It belongs to the arylamine N-acetyltransferase family.

It localises to the cytoplasm. It carries out the reaction an arylamine + acetyl-CoA = an N-acetylarylamine + CoA. The enzyme catalyses an N-hydroxyarylamine + acetyl-CoA = an N-acetoxyarylamine + CoA. Its function is as follows. Catalyzes the N- or O-acetylation of various arylamine and heterocyclic amine substrates. Participates in the detoxification of a plethora of hydrazine and arylamine drugs. In Rattus norvegicus (Rat), this protein is Arylamine N-acetyltransferase 2 (Nat2).